We begin with the raw amino-acid sequence, 412 residues long: N-carbamoyl-L-amino-acid amidohydrolase (412 aa).

Positions 82, 93, 128, and 193 each coordinate a divalent metal cation. An N-carbamoyl-L-alpha-amino acid is bound by residues Gln-196, His-229, Asn-278, Arg-291, and Gly-360. An involved in dimerization region spans residues 212–330 (SIVGVRALRV…DVDEFFNLSP (119 aa)). His-385 serves as a coordination point for a divalent metal cation.

The protein belongs to the peptidase M20 family. Homodimer. Requires Mn(2+) as cofactor. Ni(2+) serves as cofactor. The cofactor is Co(2+). It depends on Fe(2+) as a cofactor.

It catalyses the reaction an N-carbamoyl-L-alpha-amino acid + H2O + 2 H(+) = an L-alpha-amino acid + NH4(+) + CO2. The enzyme catalyses N-carbamoyl-L-tryptophan + H2O + 2 H(+) = L-tryptophan + NH4(+) + CO2. The catalysed reaction is N-carbamoyl-L-tyrosine + H2O + 2 H(+) = L-tyrosine + NH4(+) + CO2. It carries out the reaction N-carbamoyl-L-phenylalanine + H2O + 2 H(+) = L-phenylalanine + NH4(+) + CO2. Catalyzes the hydrolysis of aliphatic N-carbamoyl-L-alpha-amino acids to free L-alpha-amino acids. Is strictly L-specific since it is inactive toward N-carbamoyl-D-alpha-amino acids. Shows a preference for aromatic N-carbamoyl-L-alpha-amino acids, such as N-carbamoyl-L-tryptophan and N-carbamoyl-L-tyrosine and, to a lesser extent, N-carbamoyl-L-phenylalanine and the non-natural amino acid N-carbamoyl-L-thienylalanine. Carbamoyl derivatives of beta-alanine and charged aliphatic amino acids are not accepted as substrates. This Paenarthrobacter aurescens (Arthrobacter aurescens) protein is N-carbamoyl-L-amino-acid amidohydrolase.